The chain runs to 358 residues: MINLLNITYPEFESLIVTTLQEKTYRAMQIWQWVWQKQITDIESMTNLPQKIRASLTALIKINLPEIVTIQQSSDGTKKFLLRLSDGALIETVLIPSIDKAGNIRITQCLSSQVGCSMGCTFCSTATMGFIRNLTAGEIVSQVLLAKLHLNDNKPDKPIIRNIVFMGMGEPLLNLTELTRALHILHSEKGLNFSARRITVSTCGIKKGIQALSENGLAFLALSLHASNQELRSTIMPKAAKWDLKELIDTLKNYSLKKREKITFEYLLLGGINDSPEHAKELAKLITDIKGKLNLIPYNPAQGQPYLKPTEENILKFQKVLWSKGIVTILRKSKGQDINAACGQLKTTYLSQSSSTIY.

Residue E91 is the Proton acceptor of the active site. The region spanning 102–337 (GNIRITQCLS…TILRKSKGQD (236 aa)) is the Radical SAM core domain. C109 and C342 form a disulfide bridge. 3 residues coordinate [4Fe-4S] cluster: C116, C120, and C123. Residues 169-170 (GE), S201, 223-225 (SLH), and N299 each bind S-adenosyl-L-methionine. C342 acts as the S-methylcysteine intermediate in catalysis.

The protein belongs to the radical SAM superfamily. RlmN family. The cofactor is [4Fe-4S] cluster.

The protein resides in the cytoplasm. It carries out the reaction adenosine(2503) in 23S rRNA + 2 reduced [2Fe-2S]-[ferredoxin] + 2 S-adenosyl-L-methionine = 2-methyladenosine(2503) in 23S rRNA + 5'-deoxyadenosine + L-methionine + 2 oxidized [2Fe-2S]-[ferredoxin] + S-adenosyl-L-homocysteine. It catalyses the reaction adenosine(37) in tRNA + 2 reduced [2Fe-2S]-[ferredoxin] + 2 S-adenosyl-L-methionine = 2-methyladenosine(37) in tRNA + 5'-deoxyadenosine + L-methionine + 2 oxidized [2Fe-2S]-[ferredoxin] + S-adenosyl-L-homocysteine. Functionally, specifically methylates position 2 of adenine 2503 in 23S rRNA and position 2 of adenine 37 in tRNAs. m2A2503 modification seems to play a crucial role in the proofreading step occurring at the peptidyl transferase center and thus would serve to optimize ribosomal fidelity. This is Dual-specificity RNA methyltransferase RlmN from Lawsonia intracellularis (strain PHE/MN1-00).